A 328-amino-acid polypeptide reads, in one-letter code: Ribose-phosphate pyrophosphokinase (328 aa).

ATP contacts are provided by residues 39-41 (DGE) and 98-99 (RQ). The Mg(2+) site is built by histidine 132 and aspartate 172. Residue lysine 195 is part of the active site. Residues arginine 197, aspartate 221, and 225-229 (DTGGT) contribute to the D-ribose 5-phosphate site.

This sequence belongs to the ribose-phosphate pyrophosphokinase family. Class I subfamily. In terms of assembly, homohexamer. Requires Mg(2+) as cofactor.

The protein localises to the cytoplasm. The enzyme catalyses D-ribose 5-phosphate + ATP = 5-phospho-alpha-D-ribose 1-diphosphate + AMP + H(+). It functions in the pathway metabolic intermediate biosynthesis; 5-phospho-alpha-D-ribose 1-diphosphate biosynthesis; 5-phospho-alpha-D-ribose 1-diphosphate from D-ribose 5-phosphate (route I): step 1/1. In terms of biological role, involved in the biosynthesis of the central metabolite phospho-alpha-D-ribosyl-1-pyrophosphate (PRPP) via the transfer of pyrophosphoryl group from ATP to 1-hydroxyl of ribose-5-phosphate (Rib-5-P). This is Ribose-phosphate pyrophosphokinase from Mycoplasma pneumoniae (strain ATCC 29342 / M129 / Subtype 1) (Mycoplasmoides pneumoniae).